We begin with the raw amino-acid sequence, 347 residues long: Oxygen sensor histidine kinase NreB (347 aa).

4 residues coordinate [4Fe-4S] cluster: C59, C62, C74, and C77. Positions 153–347 (RISRELHDGI…IVTLEVPITD (195 aa)) constitute a Histidine kinase domain. The residue at position 159 (H159) is a Phosphohistidine; by autocatalysis.

[4Fe-4S] cluster serves as cofactor. In terms of processing, autophosphorylated.

The protein resides in the cytoplasm. It carries out the reaction ATP + protein L-histidine = ADP + protein N-phospho-L-histidine.. Activated by cysteine desulfurase, Fe(2+) ions and cysteine and inhibited by oxygen and ADP. In terms of biological role, member of the two-component regulatory system NreB/NreC involved in the control of dissimilatory nitrate/nitrite reduction in response to oxygen. NreB functions as a direct oxygen sensor histidine kinase which is autophosphorylated, in the absence of oxygen, probably at the conserved histidine residue, and transfers its phosphate group probably to a conserved aspartate residue of NreC. NreB/NreC activates the expression of the nitrate (narGHJI) and nitrite (nir) reductase operons, as well as the putative nitrate transporter gene narT. The polypeptide is Oxygen sensor histidine kinase NreB (nreB) (Staphylococcus carnosus (strain TM300)).